The chain runs to 199 residues: Recombination protein RecR (199 aa).

The C4-type zinc finger occupies C56 to C71. The Toprim domain maps to Q79–P173.

This sequence belongs to the RecR family.

Its function is as follows. May play a role in DNA repair. It seems to be involved in an RecBC-independent recombinational process of DNA repair. It may act with RecF and RecO. The protein is Recombination protein RecR of Gloeothece citriformis (strain PCC 7424) (Cyanothece sp. (strain PCC 7424)).